The primary structure comprises 149 residues: Deoxyuridine 5'-triphosphate nucleotidohydrolase (149 aa).

Substrate is bound by residues 68-70 (RSG), Asn81, and 85-87 (LID).

It belongs to the dUTPase family. The cofactor is Mg(2+).

The catalysed reaction is dUTP + H2O = dUMP + diphosphate + H(+). It participates in pyrimidine metabolism; dUMP biosynthesis; dUMP from dCTP (dUTP route): step 2/2. Functionally, this enzyme is involved in nucleotide metabolism: it produces dUMP, the immediate precursor of thymidine nucleotides and it decreases the intracellular concentration of dUTP so that uracil cannot be incorporated into DNA. The protein is Deoxyuridine 5'-triphosphate nucleotidohydrolase of Aromatoleum aromaticum (strain DSM 19018 / LMG 30748 / EbN1) (Azoarcus sp. (strain EbN1)).